Reading from the N-terminus, the 254-residue chain is Phosphatidylglycerol--prolipoprotein diacylglyceryl transferase (254 aa).

3 consecutive transmembrane segments (helical) span residues 11–31 (LAIR…LLLA), 49–69 (FLIA…IFEF), and 84–104 (QGGL…YIYL). Arginine 130 provides a ligand contact to a 1,2-diacyl-sn-glycero-3-phospho-(1'-sn-glycerol). Transmembrane regions (helical) follow at residues 169-189 (PTFL…VYLL), 196-216 (GIVF…IEGL), and 228-248 (VAQL…YNII).

It belongs to the Lgt family.

The protein resides in the cell membrane. The catalysed reaction is L-cysteinyl-[prolipoprotein] + a 1,2-diacyl-sn-glycero-3-phospho-(1'-sn-glycerol) = an S-1,2-diacyl-sn-glyceryl-L-cysteinyl-[prolipoprotein] + sn-glycerol 1-phosphate + H(+). It participates in protein modification; lipoprotein biosynthesis (diacylglyceryl transfer). Its function is as follows. Catalyzes the transfer of the diacylglyceryl group from phosphatidylglycerol to the sulfhydryl group of the N-terminal cysteine of a prolipoprotein, the first step in the formation of mature lipoproteins. The protein is Phosphatidylglycerol--prolipoprotein diacylglyceryl transferase of Clostridium botulinum (strain Loch Maree / Type A3).